The primary structure comprises 77 residues: uncharacterized protein (77 aa).

This is an uncharacterized protein from Xylella fastidiosa (strain 9a5c).